The chain runs to 148 residues: Protein TIFY 5B (148 aa).

Residues Pro54 to Arg89 enclose the Tify domain.

It belongs to the TIFY/JAZ family. Ubiquitinated. Targeted for degradation by the SCF(COI1) E3 ubiquitin ligase-proteasome pathway during jasmonate signaling.

Its subcellular location is the nucleus. Repressor of jasmonate responses. This is Protein TIFY 5B (TIFY 5B) from Arabidopsis thaliana (Mouse-ear cress).